A 419-amino-acid polypeptide reads, in one-letter code: Gustatory receptor for bitter taste 93a (419 aa).

The Cytoplasmic segment spans residues 1–55 (MFSSSSAMTGKRAESWSRLLLLWLYRCARGLLVLSSSLDRDKLQLKATKQGSRNR). The chain crosses the membrane as a helical span at residues 56 to 76 (FLHILWRCIVVMIYAGLWPML). At 77 to 90 (TSAVIGKRLESYAD) the chain is on the extracellular side. Residues 91 to 111 (VLALAQSMSVSILAVISFVIQ) form a helical membrane-spanning segment. Over 112–145 (ARGENQFREVLNRYLALYQRICLTTRLRHLFPTK) the chain is Cytoplasmic. A helical membrane pass occupies residues 146 to 166 (FVVFFLLKLFFTLCGCFHEII). The Extracellular portion of the chain corresponds to 167 to 184 (PLFENSHFDDISQMVGTG). The chain crosses the membrane as a helical span at residues 185–205 (FGIYMWLGTLCVLDACFLGFL). Residues 206-277 (VSGILYEHMA…NSFRRILQWQ (72 aa)) lie on the Cytoplasmic side of the membrane. The chain crosses the membrane as a helical span at residues 278–298 (ILFYIYLNFINICLMLYQYIL). At 299 to 305 (HFLNDDE) the chain is on the extracellular side. A helical transmembrane segment spans residues 306–326 (VVFVSIVMAFVKLANLVLLMM). Over 327-383 (CADYTVRQSEVPKKLPLDIVCSDMDERWDKSVETFLGQLQTQRLEIKVLGFFHLNNE) the chain is Cytoplasmic. The chain crosses the membrane as a helical span at residues 384-404 (FILLILSAIISYLFILIQFGI). The Extracellular segment spans residues 405–419 (TGGFEASEDIKNRFD).

It belongs to the insect chemoreceptor superfamily. Gustatory receptor (GR) family. Gr93a subfamily. In larvae, is expressed in neurons of the dorsal pharyngeal sense organs.

It is found in the cell membrane. Functionally, gustatory receptor required for response to the bitter in taste neurons. Gr93a cells respond to bitter compounds such as caffeine. Flies avoid bitter substances, suggesting that Gr93a neuron activity is sufficient to mediate avoidance behavior. This is Gustatory receptor for bitter taste 93a (Gr93a) from Drosophila melanogaster (Fruit fly).